The chain runs to 887 residues: Alanine--tRNA ligase (887 aa).

4 residues coordinate Zn(2+): H564, H568, C676, and H680.

It belongs to the class-II aminoacyl-tRNA synthetase family. Zn(2+) serves as cofactor.

The protein localises to the cytoplasm. The catalysed reaction is tRNA(Ala) + L-alanine + ATP = L-alanyl-tRNA(Ala) + AMP + diphosphate. In terms of biological role, catalyzes the attachment of alanine to tRNA(Ala) in a two-step reaction: alanine is first activated by ATP to form Ala-AMP and then transferred to the acceptor end of tRNA(Ala). Also edits incorrectly charged Ser-tRNA(Ala) and Gly-tRNA(Ala) via its editing domain. The sequence is that of Alanine--tRNA ligase from Agrobacterium fabrum (strain C58 / ATCC 33970) (Agrobacterium tumefaciens (strain C58)).